Here is a 306-residue protein sequence, read N- to C-terminus: Large ribosomal subunit protein uL2m (306 aa).

The transit peptide at 1–60 directs the protein to the mitochondrion; that stretch reads MALCALTSALRSLSLASAAITARVPTLLPAAQIQSNVLLQLPPALVSPSYRPVHMSADRS.

It belongs to the universal ribosomal protein uL2 family. In terms of assembly, component of the mitochondrial ribosome large subunit (39S) which comprises a 16S rRNA and about 50 distinct proteins.

It is found in the mitochondrion. The sequence is that of Large ribosomal subunit protein uL2m (Mrpl2) from Mus musculus (Mouse).